The primary structure comprises 487 residues: WD-40 repeat-containing protein MSI5 (487 aa).

M1 carries the post-translational modification N-acetylmethionine. Residues 1–12 (MESEAAATVQAT) are compositionally biased toward low complexity. The tract at residues 1–44 (MESEAAATVQATRPRRAPRTPVTAILTDKRRRKPKSNNESQLPF) is disordered. The Nuclear localization signal motif lies at 14 to 21 (PRRAPRTP). 6 WD repeats span residues 142–182 (IHPG…DRYA), 197–237 (GHQD…TMAG), 270–310 (GHKD…SPAM), 315–355 (AHDA…SNGV), 364–404 (GHRA…KKSE), and 419–466 (GHRD…YRPE). A disordered region spans residues 236-268 (AGSDSKSPGSSFKQTGEGSDKTGGPSVGPRGIY). Over residues 237–252 (GSDSKSPGSSFKQTGE) the composition is skewed to polar residues. A DWD box motif is present at residues 288-303 (FCSVGDDSCLMLWDAR).

The protein belongs to the WD repeat RBAP46/RBAP48/MSI1 family. Interacts with AHL16. Interacts with LHP1, PDP2, PDP3 and PDP6. Component of the PRC2 (polycomb repressive complex 2) complex which regulates histone methylation on histone H3K27.

It is found in the nucleus. Core histone-binding subunit that may target chromatin assembly factors, chromatin remodeling factors and histone deacetylases to their histone substrates in a manner that is regulated by nucleosomal DNA. Acts together with PDP1 and MSI4/FVE to regulate the function of the PRC2 complex on FLC. This Arabidopsis thaliana (Mouse-ear cress) protein is WD-40 repeat-containing protein MSI5.